Consider the following 352-residue polypeptide: Ly6/PLAUR domain-containing protein 3 (352 aa).

An N-terminal signal peptide occupies residues 1–32 (MDAARRGDTQPVMWTTRWLLLLPLLLCEGAQA). The UPAR/Ly6 1 domain occupies 35 to 128 (CYSCVQKADD…LNLTLRGLNP (94 aa)). N-linked (GlcNAc...) asparagine glycosylation is found at N120, N131, N178, and N185. The region spanning 142–224 (CYSCMGLSRE…GSCCQGPRCN (83 aa)) is the UPAR/Ly6 2 domain. Residues 236–249 (RIPPLVLLPPPTTP) show a composition bias toward pro residues. The tract at residues 236 to 330 (RIPPLVLLPP…KGGAQIPSKG (95 aa)) is disordered. Residues 250–285 (APSTRTQNSSSTTSTTAPTTATTTIKPTTVQASHTS) show a composition bias toward low complexity. Composition is skewed to basic and acidic residues over residues 286 to 300 (STHETEHEVIQEEGS) and 309 to 320 (HQDRSNMGKFPE). Residue G330 is the site of GPI-anchor amidated glycine attachment. Residues 331–352 (GSDALGSWLSAILLTVVAGAML) constitute a propeptide, removed in mature form.

As to quaternary structure, interacts with AGR2 and AGR3. Binds laminin-1 and laminin-5. Interacts with LGALS3. As to expression, found predominantly on the basal layers of squamous epithelium. Expressed in the gravid uterus and on epithelial of the upper gastrointestinal tract. It has been found in tumor lines which metastasize via the lymphatic system.

The protein localises to the cell membrane. Supports cell migration. May be involved in tumor progression. This Rattus norvegicus (Rat) protein is Ly6/PLAUR domain-containing protein 3 (Lypd3).